A 321-amino-acid chain; its full sequence is Homoserine O-acetyltransferase (321 aa).

The Acyl-thioester intermediate role is filled by Cys142. 2 residues coordinate substrate: Lys163 and Ser192. His235 functions as the Proton acceptor in the catalytic mechanism. Glu237 is a catalytic residue. Arg249 contributes to the substrate binding site.

Belongs to the MetA family.

Its subcellular location is the cytoplasm. It catalyses the reaction L-homoserine + acetyl-CoA = O-acetyl-L-homoserine + CoA. Its pathway is amino-acid biosynthesis; L-methionine biosynthesis via de novo pathway; O-acetyl-L-homoserine from L-homoserine: step 1/1. In terms of biological role, transfers an acetyl group from acetyl-CoA to L-homoserine, forming acetyl-L-homoserine. The sequence is that of Homoserine O-acetyltransferase from Lactococcus lactis subsp. lactis (strain IL1403) (Streptococcus lactis).